A 212-amino-acid polypeptide reads, in one-letter code: MSVGILGTKLGMTQVFDEAGRAIPVTVVQAGPCPVTQIKTAQTDGYTAIQIGYGSTTEKALTRPELGHLKKSGSTPVRHLQEYRLADVSEYELGQSISADLFSEGQLVDISGTSIGRGFAGYQKRHNFRRGPMGHGSKNHRAPGSTGAGTTPGRIYPGKRMAGQMGNVKKTIRKLTVVRVDAERNVLLIKGSVPGKPGALLNIQPATIVGES.

Positions 129 to 156 are disordered; it reads RRGPMGHGSKNHRAPGSTGAGTTPGRIY. Over residues 142 to 153 the composition is skewed to low complexity; the sequence is APGSTGAGTTPG.

This sequence belongs to the universal ribosomal protein uL3 family. As to quaternary structure, part of the 50S ribosomal subunit. Forms a cluster with proteins L14 and L19.

One of the primary rRNA binding proteins, it binds directly near the 3'-end of the 23S rRNA, where it nucleates assembly of the 50S subunit. The polypeptide is Large ribosomal subunit protein uL3 (Acaryochloris marina (strain MBIC 11017)).